The primary structure comprises 177 residues: Ribosome maturation factor RimM (177 aa).

The region spanning 92 to 166 is the PRC barrel domain; it reads EDTFYHADLM…RIVVVPDTNP (75 aa).

It belongs to the RimM family. In terms of assembly, binds ribosomal protein uS19.

Its subcellular location is the cytoplasm. An accessory protein needed during the final step in the assembly of 30S ribosomal subunit, possibly for assembly of the head region. Essential for efficient processing of 16S rRNA. May be needed both before and after RbfA during the maturation of 16S rRNA. It has affinity for free ribosomal 30S subunits but not for 70S ribosomes. This Azorhizobium caulinodans (strain ATCC 43989 / DSM 5975 / JCM 20966 / LMG 6465 / NBRC 14845 / NCIMB 13405 / ORS 571) protein is Ribosome maturation factor RimM.